A 302-amino-acid polypeptide reads, in one-letter code: Hydrogen peroxide-inducible genes activator (302 aa).

Residues 1–58 (MNIRDLEYLVALAEHRHFRRAADSCHVSQPTLSGQIRKLEDELGVMLLERTSRKVLFT) enclose the HTH lysR-type domain. Residues 18 to 37 (FRRAADSCHVSQPTLSGQIR) constitute a DNA-binding region (H-T-H motif).

This sequence belongs to the LysR transcriptional regulatory family.

Its function is as follows. Required for the induction of a regulon of hydrogen peroxide inducible genes such as catalase and glutathione-reductase. The chain is Hydrogen peroxide-inducible genes activator (oxyR) from Pectobacterium carotovorum subsp. carotovorum (Erwinia carotovora subsp. carotovora).